We begin with the raw amino-acid sequence, 662 residues long: Polyunsaturated fatty acid lipoxygenase ALOX15 (662 aa).

The PLAT domain maps to 2–114 (GLYRIRVSTG…VLSLPEGTGR (113 aa)). The region spanning 115-662 (TVGEDPQGLF…PSVVENSVAI (548 aa)) is the Lipoxygenase domain. Fe cation contacts are provided by H360, H365, H540, H544, and I662.

Belongs to the lipoxygenase family. Interacts with PEBP1; in response to IL13/interleukin-13, prevents the interaction of PEBP1 with RAF1 to activate the ERK signaling cascade. Fe cation serves as cofactor. Detected in monocytes and eosinophils (at protein level). Expressed in airway epithelial cells.

It localises to the cytoplasm. The protein localises to the cytosol. The protein resides in the cell membrane. It is found in the lipid droplet. The enzyme catalyses (5Z,8Z,11Z,14Z)-eicosatetraenoate + O2 = (12S)-hydroperoxy-(5Z,8Z,10E,14Z)-eicosatetraenoate. It catalyses the reaction (5Z,8Z,11Z,14Z)-eicosatetraenoate + O2 = (15S)-hydroperoxy-(5Z,8Z,11Z,13E)-eicosatetraenoate. The catalysed reaction is (9Z,12Z)-octadecadienoate + O2 = (13S)-hydroperoxy-(9Z,11E)-octadecadienoate. It carries out the reaction (5Z,8Z,11Z,14Z)-eicosatetraenoate + 2 O2 = (14R,15S)-dihydroperoxy-(5Z,8Z,10E,12E)-eicosatetraenoate. The enzyme catalyses (5Z,8Z,11Z,14Z)-eicosatetraenoate + 2 O2 = (8S,15S)-dihydroperoxy-(5Z,9E,11Z,13E)-eicosatetraenoate. It catalyses the reaction (14S,15R)-epoxy-(5Z,8Z,11Z)-eicosatrienoate + O2 = (8S)-hydroperoxy-(14S,15R)-epoxy-(5Z,9E,11Z)-eicosatrienoate. The catalysed reaction is (14S,15R)-epoxy-(5Z,8Z,11Z)-eicosatrienoate + O2 = (12S)-hydroperoxy-(14S,15R)-epoxy-(5Z,8Z,10E)-eicosatrienoate. It carries out the reaction (14R,15S)-epoxy-(5Z,8Z,11Z)-eicosatrienoate + O2 = (5S)-hydroperoxy-(14R,15S)-epoxy-(6E,8Z,11Z)-eicosatrienoate. The enzyme catalyses (14R,15S)-epoxy-(5Z,8Z,11Z)-eicosatrienoate + O2 = (12S)-hydroperoxy-(14R,15S)-epoxy-(5Z,8Z,10E)-eicosatrienoate. It catalyses the reaction (15R)-hydroperoxy-(5Z,8Z,11Z,13E)-eicosatetraenoate = 15-oxo-(5Z,8Z,11Z,13E)-eicosatetraenoate + H2O. The catalysed reaction is (15S)-hydroperoxy-(5Z,8Z,11Z,13E)-eicosatetraenoate = (14S,15S)-epoxy-(5Z,8Z,10E,12E)-eicosatetraenoate + H2O. It carries out the reaction (12S)-hydroperoxy-(5Z,8Z,10E,14Z)-eicosatetraenoate = (8S)-hydroxy-(11S,12S)-epoxy-(5Z,9E,14Z)-eicosatrienoate. The enzyme catalyses (4Z,7Z,10Z,13Z,16Z,19Z)-docosahexaenoate + O2 = (14S)-hydroperoxy-(4Z,7Z,10Z,12E,16Z,19Z)-docosahexaenoate. It catalyses the reaction (4Z,7Z,10Z,13Z,16Z,19Z)-docosahexaenoate + O2 = (17S)-hydroperoxy-(4Z,7Z,10Z,13Z,15E,19Z)-docosahexaenoate. The catalysed reaction is (7S)-hydroperoxy-(4Z,8E,10Z,13Z,16Z,19Z)-docosahexaenoate + O2 = (7S,14S)-dihydroperoxy-(4Z,8E,10Z,12E,16Z,19Z)-docosahexaenoate. It carries out the reaction (7S)-hydroperoxy-(4Z,8E,10Z,13Z,16Z,19Z)-docosahexaenoate + O2 = (7S,17S)-dihydroperoxy-(4Z,8E,10Z,13Z,15E,19Z)-docosahexaenoate. The enzyme catalyses (4Z,7Z,10Z,13Z,16Z,19Z)-docosahexaenoate + O2 = (11S)-hydroperoxy-(4Z,7Z,9E,13Z,16Z,19Z)-docosahexaenoate. It catalyses the reaction (7Z,10Z,13Z,16Z,19Z)-docosapentaenoate + O2 = 14-hydroperoxy-(7Z,10Z,12E,16Z,19Z)-docosapentaenoate. The catalysed reaction is (4Z,7Z,10Z,13Z,16Z)-docosapentaenoate + O2 = 14-hydroperoxy-(4Z,7Z,10Z,12E,16Z)-docosapentaenoate. It carries out the reaction N-(5Z,8Z,11Z,14Z)-eicosatetraenoyl-taurine + O2 = N-(12S)-hydroperoxy-(5Z,8Z,10E,14Z)-eicosatetraenoyl-taurine. The enzyme catalyses N-(5Z,8Z,11Z,14Z)-eicosatetraenoyl-gamma-aminobutanoate + O2 = N-(12S)-hydroperoxy-(5Z,8Z,10E,14Z)-eicosatetraenoyl-gamma-aminobutanoate. It catalyses the reaction N-(5Z,8Z,11Z,14Z)-eicosatetraenoyl-glycine + O2 = N-(12S)-hydroperoxy-(5Z,8Z,10E,14Z)-eicosatetraenoyl-glycine. The catalysed reaction is N-(5Z,8Z,11Z,14Z)-eicosatetraenoyl-L-alanine + O2 = N-(12S)-hydroperoxy-(5Z,8Z,10E,14Z)-eicosatetraenoyl-alanine. It carries out the reaction N-(5Z,8Z,11Z,14Z)-eicosatetraenoyl-taurine + O2 = N-(15S)-hydroperoxy-(5Z,8Z,11Z,13E)-eicosatetraenoyl-taurine. The enzyme catalyses N-(5Z,8Z,11Z,14Z)-eicosatetraenoyl-gamma-aminobutanoate + O2 = N-(15S)-hydroperoxy-(5Z,8Z,11Z,13E)-eicosatetraenoyl-gamma-aminobutanoate. It catalyses the reaction N-(5Z,8Z,11Z,14Z)-eicosatetraenoyl-glycine + O2 = N-(15S)-hydroperoxy-(5Z,8Z,11Z,13E)-eicosatetraenoyl-glycine. The catalysed reaction is N-(5Z,8Z,11Z,14Z)-eicosatetraenoyl-L-alanine + O2 = N-(15S)-hydroperoxy-(5Z,8Z,11Z,13E)-eicosatetraenoyl-alanine. Its pathway is lipid metabolism; hydroperoxy eicosatetraenoic acid biosynthesis. Activity is increased by binding phosphatidylinositol phosphates, especially phosphatidylinositol 3,4-bisphosphate and phosphatidylinositol 4,5-bisphosphate. Inactivated at 37 degrees Celsius by (13S)-hydroperoxy-(9Z,11E)-octadecadienoate. Functionally, non-heme iron-containing dioxygenase that catalyzes the stereo-specific peroxidation of free and esterified polyunsaturated fatty acids generating a spectrum of bioactive lipid mediators. It inserts peroxyl groups at C12 or C15 of arachidonate ((5Z,8Z,11Z,14Z)-eicosatetraenoate) producing both 12-hydroperoxyeicosatetraenoate/12-HPETE and 15-hydroperoxyeicosatetraenoate/15-HPETE. It may then act on 12-HPETE to produce hepoxilins, which may show pro-inflammatory properties. Can also peroxidize linoleate ((9Z,12Z)-octadecadienoate) to 13-hydroperoxyoctadecadienoate/13-HPODE. May participate in the sequential oxidations of DHA ((4Z,7Z,10Z,13Z,16Z,19Z)-docosahexaenoate) to generate specialized pro-resolving mediators (SPMs)like resolvin D5 ((7S,17S)-diHPDHA) and (7S,14S)-diHPDHA, that actively down-regulate the immune response and have anti-aggregation properties with platelets. Can convert epoxy fatty acids to hydroperoxy-epoxides derivatives followed by an intramolecular nucleophilic substitution leading to the formation of monocyclic endoperoxides. Plays an important role during the maintenance of self-tolerance by peroxidizing membrane-bound phosphatidylethanolamine which can then signal the sorting process for clearance of apoptotic cells during inflammation and prevent an autoimmune response. In addition to its role in the immune and inflammatory responses, this enzyme may play a role in epithelial wound healing in the cornea through production of lipoxin A4 (LXA(4)) and docosahexaenoic acid-derived neuroprotectin D1 (NPD1; 10R,17S-HDHA), both lipid autacoids exhibit anti-inflammatory and neuroprotective properties. Furthermore, it may regulate actin polymerization which is crucial for several biological processes such as the phagocytosis of apoptotic cells. It is also implicated in the generation of endogenous ligands for peroxisome proliferator activated receptor (PPAR-gamma), hence modulating macrophage development and function. It may also exert a negative effect on skeletal development by regulating bone mass through this pathway. As well as participates in ER stress and downstream inflammation in adipocytes, pancreatic islets, and liver. Finally, it is also involved in the cellular response to IL13/interleukin-13. This Homo sapiens (Human) protein is Polyunsaturated fatty acid lipoxygenase ALOX15.